A 346-amino-acid polypeptide reads, in one-letter code: UDP-3-O-acylglucosamine N-acyltransferase (346 aa).

His240 functions as the Proton acceptor in the catalytic mechanism.

This sequence belongs to the transferase hexapeptide repeat family. LpxD subfamily. Homotrimer.

The catalysed reaction is a UDP-3-O-[(3R)-3-hydroxyacyl]-alpha-D-glucosamine + a (3R)-hydroxyacyl-[ACP] = a UDP-2-N,3-O-bis[(3R)-3-hydroxyacyl]-alpha-D-glucosamine + holo-[ACP] + H(+). The protein operates within bacterial outer membrane biogenesis; LPS lipid A biosynthesis. In terms of biological role, catalyzes the N-acylation of UDP-3-O-acylglucosamine using 3-hydroxyacyl-ACP as the acyl donor. Is involved in the biosynthesis of lipid A, a phosphorylated glycolipid that anchors the lipopolysaccharide to the outer membrane of the cell. The protein is UDP-3-O-acylglucosamine N-acyltransferase of Bacteroides thetaiotaomicron (strain ATCC 29148 / DSM 2079 / JCM 5827 / CCUG 10774 / NCTC 10582 / VPI-5482 / E50).